Consider the following 583-residue polypeptide: ATP-dependent lipid A-core flippase (583 aa).

5 helical membrane-spanning segments follow: residues 27–47 (LAVA…MVSL), 69–89 (LLVF…TYCL), 142–162 (ALVS…LMFY), 165–185 (WQLS…IGFV), and 249–269 (AAAN…VLYL). The ABC transmembrane type-1 domain maps to 28 to 310 (AVAVVALIIN…LTNVTSQFQR (283 aa)). One can recognise an ABC transporter domain in the interval 342 to 578 (VNVKDISFTY…DGAYAQLHRI (237 aa)). 376–383 (GRSGSGKS) provides a ligand contact to ATP.

Belongs to the ABC transporter superfamily. Lipid exporter (TC 3.A.1.106) family. As to quaternary structure, homodimer.

The protein localises to the cell inner membrane. It catalyses the reaction ATP + H2O + lipid A-core oligosaccharideSide 1 = ADP + phosphate + lipid A-core oligosaccharideSide 2.. In terms of biological role, involved in lipopolysaccharide (LPS) biosynthesis. Translocates lipid A-core from the inner to the outer leaflet of the inner membrane. Transmembrane domains (TMD) form a pore in the inner membrane and the ATP-binding domain (NBD) is responsible for energy generation. This chain is ATP-dependent lipid A-core flippase, found in Vibrio vulnificus (strain YJ016).